The following is a 428-amino-acid chain: Pyruvate kinase (428 aa).

Arg34 is a binding site for substrate. Residues Asn36, Ser38, Asp68, and Thr69 each contribute to the K(+) site. 36 to 39 (NFSH) is a binding site for ATP. Residues Arg75 and Lys152 each coordinate ATP. Residue Glu214 coordinates Mg(2+). Gly237, Asp238, and Thr270 together coordinate substrate. Position 238 (Asp238) interacts with Mg(2+).

This sequence belongs to the pyruvate kinase family. In terms of assembly, homotetramer. Mg(2+) serves as cofactor. K(+) is required as a cofactor.

The enzyme catalyses pyruvate + ATP = phosphoenolpyruvate + ADP + H(+). It participates in carbohydrate degradation; glycolysis; pyruvate from D-glyceraldehyde 3-phosphate: step 5/5. The polypeptide is Pyruvate kinase (PYK1) (Encephalitozoon cuniculi (strain GB-M1) (Microsporidian parasite)).